The sequence spans 395 residues: Pyridinium-3,5-bisthiocarboxylic acid mononucleotide nickel insertion protein (395 aa).

The protein belongs to the LarC family.

It catalyses the reaction Ni(II)-pyridinium-3,5-bisthiocarboxylate mononucleotide = pyridinium-3,5-bisthiocarboxylate mononucleotide + Ni(2+). Involved in the biosynthesis of a nickel-pincer cofactor ((SCS)Ni(II) pincer complex). Binds Ni(2+), and functions in nickel delivery to pyridinium-3,5-bisthiocarboxylic acid mononucleotide (P2TMN), to form the mature cofactor. Is thus probably required for the activation of nickel-pincer cofactor-dependent enzymes. This is Pyridinium-3,5-bisthiocarboxylic acid mononucleotide nickel insertion protein from Staphylococcus epidermidis (strain ATCC 12228 / FDA PCI 1200).